Here is a 92-residue protein sequence, read N- to C-terminus: C-C motif chemokine 3 (92 aa).

An N-terminal signal peptide occupies residues 1-23 (MKVSTTALAVLLCTMTLCNQVFS). 2 disulfides stabilise this stretch: Cys34–Cys57 and Cys35–Cys73.

Belongs to the intercrine beta (chemokine CC) family. In terms of assembly, self-associates. Also heterodimer of MIP-1-alpha(4-69) and MIP-1-beta(3-69). Interacts with CCR1. As to expression, expressed in lung, spleen, and pancreas.

The protein resides in the secreted. Its function is as follows. Monokine with inflammatory and chemokinetic properties. Binds to CCR1, CCR4 and CCR5. One of the major HIV-suppressive factors produced by CD8+ T-cells. Recombinant MIP-1-alpha induces a dose-dependent inhibition of different strains of HIV-1, HIV-2, and simian immunodeficiency virus (SIV). This is C-C motif chemokine 3 (Ccl3) from Mus musculus (Mouse).